Consider the following 423-residue polypeptide: Elongation factor 1-alpha (423 aa).

Residues 5-221 (KEHINVAFIG…DLLKPPEKLV (217 aa)) enclose the tr-type G domain. The G1 stretch occupies residues 14 to 21 (GHVDHGKS). 14–21 (GHVDHGKS) is a binding site for GTP. Mg(2+) is bound at residue Ser-21. The interval 70–74 (GVTID) is G2. The interval 91–94 (DCPG) is G3. GTP is bound by residues 91–95 (DCPGH) and 146–149 (NKMD). The segment at 146–149 (NKMD) is G4. The G5 stretch occupies residues 185 to 187 (SAY).

Belongs to the TRAFAC class translation factor GTPase superfamily. Classic translation factor GTPase family. EF-Tu/EF-1A subfamily.

Its subcellular location is the cytoplasm. The enzyme catalyses GTP + H2O = GDP + phosphate + H(+). GTP hydrolase that promotes the GTP-dependent binding of aminoacyl-tRNA to the A-site of ribosomes during protein biosynthesis. The chain is Elongation factor 1-alpha from Archaeoglobus fulgidus (strain ATCC 49558 / DSM 4304 / JCM 9628 / NBRC 100126 / VC-16).